A 141-amino-acid polypeptide reads, in one-letter code: Cystatin (141 aa).

Positions 1–26 (MVHSQLPVVALLRLLCALLLLPSATM) are cleaved as a signal peptide. In terms of domain architecture, Cystatin spans 29–129 (GGLSPRSVTD…CRFQVWSRPW (101 aa)). The short motif at 73–77 (QVVAG) is the Secondary area of contact element. 2 cysteine pairs are disulfide-bonded: cysteine 91–cysteine 107 and cysteine 120–cysteine 140.

The protein belongs to the cystatin family. Expressed at a low level by the venom gland (at protein level).

It localises to the secreted. Inhibits various C1 cysteine proteases including cathepsin L, papain and cathepsin B. This protein has no toxic activity and its function in the venom is unknown. It may play a role as a housekeeping or regulatory protein. In Notechis scutatus scutatus (Mainland tiger snake), this protein is Cystatin.